Reading from the N-terminus, the 596-residue chain is Serine/threonine-protein kinase PknH (596 aa).

Residues 1 to 373 (MSDAQDSRVG…QTPRKTNPWP (373 aa)) lie on the Cytoplasmic side of the membrane. The 261-residue stretch at 16-276 (YHLKRLLGRG…DLALAAHEAL (261 aa)) folds into the Protein kinase domain. Residues 22–30 (LGRGGMGEV) and lysine 45 contribute to the ATP site. Aspartate 139 serves as the catalytic Proton acceptor. The residue at position 170 (threonine 170) is a Phosphothreonine. Residues 292-368 (QESTLPGTAA…PSPWAQTPRK (77 aa)) are disordered. Residues 307 to 318 (PTMPTVTPPPIQ) are compositionally biased toward pro residues. The helical transmembrane segment at 374-394 (LVAGAAAVVLVLVLGAIGIWI) threads the bilayer. Residues 395 to 596 (ANRPKPVQPP…AKIVDKVNKE (202 aa)) lie on the Extracellular side of the membrane.

It belongs to the protein kinase superfamily. Ser/Thr protein kinase family. In terms of processing, autophosphorylated on threonine and serine residues.

It localises to the cell membrane. The enzyme catalyses L-seryl-[protein] + ATP = O-phospho-L-seryl-[protein] + ADP + H(+). It carries out the reaction L-threonyl-[protein] + ATP = O-phospho-L-threonyl-[protein] + ADP + H(+). The protein is Serine/threonine-protein kinase PknH (pknH) of Mycobacterium bovis (strain ATCC BAA-935 / AF2122/97).